A 314-amino-acid polypeptide reads, in one-letter code: tRNA dimethylallyltransferase (314 aa).

11-18 (GPTGSGKT) is an ATP binding site. A substrate-binding site is contributed by 13-18 (TGSGKT). The interaction with substrate tRNA stretch occupies residues 36-39 (DSMQ).

This sequence belongs to the IPP transferase family. In terms of assembly, monomer. Requires Mg(2+) as cofactor.

The enzyme catalyses adenosine(37) in tRNA + dimethylallyl diphosphate = N(6)-dimethylallyladenosine(37) in tRNA + diphosphate. In terms of biological role, catalyzes the transfer of a dimethylallyl group onto the adenine at position 37 in tRNAs that read codons beginning with uridine, leading to the formation of N6-(dimethylallyl)adenosine (i(6)A). The chain is tRNA dimethylallyltransferase from Chlamydia muridarum (strain MoPn / Nigg).